The chain runs to 295 residues: Small ribosomal subunit biogenesis GTPase RsgA (295 aa).

Residues 68-228 form the CP-type G domain; that stretch reads KNLLTKPHVA…VVDTPGFANL (161 aa). Residues 117–120 and 170–178 each bind GTP; these read NKMD and GLSGVGKSS. 4 residues coordinate Zn(2+): cysteine 250, cysteine 255, histidine 257, and cysteine 263.

It belongs to the TRAFAC class YlqF/YawG GTPase family. RsgA subfamily. As to quaternary structure, monomer. Associates with 30S ribosomal subunit, binds 16S rRNA. Zn(2+) is required as a cofactor.

It is found in the cytoplasm. In terms of biological role, one of several proteins that assist in the late maturation steps of the functional core of the 30S ribosomal subunit. Helps release RbfA from mature subunits. May play a role in the assembly of ribosomal proteins into the subunit. Circularly permuted GTPase that catalyzes slow GTP hydrolysis, GTPase activity is stimulated by the 30S ribosomal subunit. This is Small ribosomal subunit biogenesis GTPase RsgA from Thermotoga petrophila (strain ATCC BAA-488 / DSM 13995 / JCM 10881 / RKU-1).